The primary structure comprises 475 residues: Aspartyl/glutamyl-tRNA(Asn/Gln) amidotransferase subunit B (475 aa).

This sequence belongs to the GatB/GatE family. GatB subfamily. In terms of assembly, heterotrimer of A, B and C subunits.

It carries out the reaction L-glutamyl-tRNA(Gln) + L-glutamine + ATP + H2O = L-glutaminyl-tRNA(Gln) + L-glutamate + ADP + phosphate + H(+). It catalyses the reaction L-aspartyl-tRNA(Asn) + L-glutamine + ATP + H2O = L-asparaginyl-tRNA(Asn) + L-glutamate + ADP + phosphate + 2 H(+). In terms of biological role, allows the formation of correctly charged Asn-tRNA(Asn) or Gln-tRNA(Gln) through the transamidation of misacylated Asp-tRNA(Asn) or Glu-tRNA(Gln) in organisms which lack either or both of asparaginyl-tRNA or glutaminyl-tRNA synthetases. The reaction takes place in the presence of glutamine and ATP through an activated phospho-Asp-tRNA(Asn) or phospho-Glu-tRNA(Gln). The sequence is that of Aspartyl/glutamyl-tRNA(Asn/Gln) amidotransferase subunit B from Chlorobium luteolum (strain DSM 273 / BCRC 81028 / 2530) (Pelodictyon luteolum).